A 260-amino-acid polypeptide reads, in one-letter code: HTH-type transcriptional repressor NanR (260 aa).

The disordered stretch occupies residues 1–22; sequence MNAFDSQAEDSPTSLGRSLRRR. Residues 27–95 enclose the HTH gntR-type domain; sequence KKLSEMVEEE…NGERARVSRP (69 aa). The segment at residues 55–74 is a DNA-binding region (H-T-H motif); the sequence is ERELMAFFNVGRPSVREALA.

The protein belongs to the NanR family.

Functionally, transcriptional repressor that controls expression of the genes required for the catabolism of sialic acids. The chain is HTH-type transcriptional repressor NanR from Salmonella newport (strain SL254).